A 215-amino-acid chain; its full sequence is 3-isopropylmalate dehydratase small subunit (215 aa).

Belongs to the LeuD family. LeuD type 1 subfamily. Heterodimer of LeuC and LeuD.

It carries out the reaction (2R,3S)-3-isopropylmalate = (2S)-2-isopropylmalate. The protein operates within amino-acid biosynthesis; L-leucine biosynthesis; L-leucine from 3-methyl-2-oxobutanoate: step 2/4. Functionally, catalyzes the isomerization between 2-isopropylmalate and 3-isopropylmalate, via the formation of 2-isopropylmaleate. This chain is 3-isopropylmalate dehydratase small subunit, found in Xanthomonas oryzae pv. oryzae (strain MAFF 311018).